A 229-amino-acid chain; its full sequence is 7-cyano-7-deazaguanine synthase (229 aa).

L15–V25 contributes to the ATP binding site. Residues C194, C204, C207, and C210 each coordinate Zn(2+).

The protein belongs to the QueC family. The cofactor is Zn(2+).

The enzyme catalyses 7-carboxy-7-deazaguanine + NH4(+) + ATP = 7-cyano-7-deazaguanine + ADP + phosphate + H2O + H(+). It participates in purine metabolism; 7-cyano-7-deazaguanine biosynthesis. In terms of biological role, catalyzes the ATP-dependent conversion of 7-carboxy-7-deazaguanine (CDG) to 7-cyano-7-deazaguanine (preQ(0)). The chain is 7-cyano-7-deazaguanine synthase from Pseudomonas savastanoi pv. phaseolicola (strain 1448A / Race 6) (Pseudomonas syringae pv. phaseolicola (strain 1448A / Race 6)).